The primary structure comprises 555 residues: Myo-inositol transporter 2 (555 aa).

Over 1–61 the chain is Cytoplasmic; that stretch reads MSSTLDTITP…NLVRAENEDK (61 aa). The helical transmembrane segment at 62-82 threads the bilayer; that stretch reads VTPYFMFLISVAAIAGFLFGY. At 83 to 108 the chain is on the extracellular side; sequence DTGIVGAALPMVGTSLGHTLSATESE. Residues 109-129 form a helical membrane-spanning segment; sequence IITAGTTIGAIFGASILGTMA. The Cytoplasmic portion of the chain corresponds to 130–142; that stretch reads DKLGRKWAMIISD. Residues 143 to 163 form a helical membrane-spanning segment; that stretch reads FAFTAGAIIIAASYSVPQIIV. Residues 164 to 165 are Extracellular-facing; it reads GR. The chain crosses the membrane as a helical span at residues 166–186; it reads LVLGVGVGGAAVIAPLYIAEL. Residues 187-200 are Cytoplasmic-facing; sequence APTAVRGRCVGANA. A helical transmembrane segment spans residues 201–221; that stretch reads FCIPFGQVVASAIGAGFQAGV. Residues 222–228 are Extracellular-facing; the sequence is PYHIGWR. A helical membrane pass occupies residues 229–249; that stretch reads VLFGLGVVPSVVQLCLMHFLP. The Cytoplasmic segment spans residues 250–328; sequence ESPRVLVLRG…AIISVSGVQA (79 aa). Residues 329 to 349 form a helical membrane-spanning segment; it reads FGQLTGFNTLLYYSGTIFGLL. The Extracellular portion of the chain corresponds to 350–355; the sequence is GLKNGA. Residues 356 to 376 traverse the membrane as a helical segment; the sequence is AAGLIPSCLNALFVFIGMSIV. At 377 to 385 the chain is on the cytoplasmic side; it reads DKVGRRKLM. Residues 386–406 traverse the membrane as a helical segment; that stretch reads ITFIPGMMIAFTWTIISFHFL. Residues 407–427 are Extracellular-facing; it reads TKPTGGLLLKDYQYSTPLVGS. A helical membrane pass occupies residues 428 to 448; the sequence is VLGSIVLFVIPFGLTYSHIIW. The Cytoplasmic segment spans residues 449–461; the sequence is YQSEFLPLEIRAA. The helical transmembrane segment at 462–482 threads the bilayer; that stretch reads GSAISTTACWLANLVVSVAYL. Over 483–487 the chain is Extracellular; it reads TQLEK. The helical transmembrane segment at 488–508 threads the bilayer; it reads LGATGTYGLYLGFITIGYIFV. The Cytoplasmic segment spans residues 509–555; sequence YFCYPETKGLSIDETAEIFIDGFGIEKAHQMLREKRAFAAELYAGRA.

Belongs to the major facilitator superfamily. Sugar transporter (TC 2.A.1.1) family.

The protein localises to the cell membrane. The enzyme catalyses myo-inositol(out) + H(+)(out) = myo-inositol(in) + H(+)(in). In terms of biological role, transporter for myo-inositol. The polypeptide is Myo-inositol transporter 2 (Cryptococcus neoformans var. grubii serotype A (strain H99 / ATCC 208821 / CBS 10515 / FGSC 9487) (Filobasidiella neoformans var. grubii)).